Consider the following 114-residue polypeptide: Large ribosomal subunit protein bL20c (114 aa).

This sequence belongs to the bacterial ribosomal protein bL20 family.

It localises to the plastid. The protein localises to the chloroplast. Binds directly to 23S ribosomal RNA and is necessary for the in vitro assembly process of the 50S ribosomal subunit. It is not involved in the protein synthesizing functions of that subunit. The chain is Large ribosomal subunit protein bL20c from Tetradesmus obliquus (Green alga).